The sequence spans 342 residues: Probable allantoicase (342 aa).

This sequence belongs to the allantoicase family.

The catalysed reaction is allantoate + H2O = (S)-ureidoglycolate + urea. Its pathway is nitrogen metabolism; (S)-allantoin degradation; (S)-ureidoglycolate from allantoate (aminidohydrolase route): step 1/1. Utilization of purines as secondary nitrogen sources, when primary sources are limiting. This chain is Probable allantoicase, found in Schizosaccharomyces pombe (strain 972 / ATCC 24843) (Fission yeast).